Reading from the N-terminus, the 218-residue chain is Zinc finger BED domain-containing protein 2 (218 aa).

Over residues 1-11 (MMRREDEEEEG) the composition is skewed to acidic residues. Positions 1–24 (MMRREDEEEEGTMMKAKGDLEMKE) are disordered. The segment at 52-113 (TRFSEAWEYF…SMHREELEKS (62 aa)) adopts a BED-type zinc-finger fold. Residues cysteine 78, cysteine 81, histidine 101, and histidine 106 each contribute to the Zn(2+) site. The interval 104–137 (SMHREELEKSGHGQAGQRQDPRPHGPQLPTGIEG) is disordered. Residues 105 to 114 (MHREELEKSG) are compositionally biased toward basic and acidic residues.

As to expression, expressed in keratinocytes.

It localises to the nucleus. Its function is as follows. Transcriptional regulator which has intrinsic repressor activity and which competes with the transcriptional activator IRF1 for binding to the 5'-[CA]GAA[AC]C[CT]-3' consensus sequence in gene promoters. May thereby play a role in keratinocyte differentiation. This is Zinc finger BED domain-containing protein 2 (ZBED2) from Homo sapiens (Human).